Consider the following 403-residue polypeptide: Phosphopentomutase (403 aa).

Mn(2+) is bound by residues aspartate 13, aspartate 298, histidine 303, aspartate 339, histidine 340, and histidine 351.

Belongs to the phosphopentomutase family. The cofactor is Mn(2+).

The protein localises to the cytoplasm. It catalyses the reaction 2-deoxy-alpha-D-ribose 1-phosphate = 2-deoxy-D-ribose 5-phosphate. The catalysed reaction is alpha-D-ribose 1-phosphate = D-ribose 5-phosphate. It participates in carbohydrate degradation; 2-deoxy-D-ribose 1-phosphate degradation; D-glyceraldehyde 3-phosphate and acetaldehyde from 2-deoxy-alpha-D-ribose 1-phosphate: step 1/2. Isomerase that catalyzes the conversion of deoxy-ribose 1-phosphate (dRib-1-P) and ribose 1-phosphate (Rib-1-P) to deoxy-ribose 5-phosphate (dRib-5-P) and ribose 5-phosphate (Rib-5-P), respectively. The polypeptide is Phosphopentomutase (Streptococcus gordonii (strain Challis / ATCC 35105 / BCRC 15272 / CH1 / DL1 / V288)).